Here is a 470-residue protein sequence, read N- to C-terminus: Calcium-binding and coiled-coil domain-containing protein 2 (470 aa).

Positions 131 to 134 (ILLV) match the CLIR motif. Positions 132 to 368 (LLVTTEEEAQ…QMEDLSYTLE (237 aa)) form a coiled coil. The short motif at 201 to 204 (QQNQ) is the LIR-like element. The UBZ1-type zinc-finger motif lies at 441-464 (QMQCPECGSEFENFQVFQDHIFCH). Zn(2+) contacts are provided by C444, C447, H460, and H464.

Belongs to the CALCOCO family.

The protein resides in the cytoplasm. It is found in the perinuclear region. The protein localises to the cytoskeleton. It localises to the cytoplasmic vesicle. Its subcellular location is the autophagosome membrane. Functionally, xenophagy-specific receptor required for autophagy-mediated intracellular bacteria degradation. Acts as an effector protein of galectin-sensed membrane damage that restricts the proliferation of infecting pathogens upon entry into the cytosol by targeting galectin-associated bacteria for autophagy. Initially orchestrates bacteria targeting to autophagosomes and subsequently ensures pathogen degradation by regulating pathogen-containing autophagosome maturation. May play a role in ruffle formation and actin cytoskeleton organization and seems to negatively regulate constitutive secretion. This is Calcium-binding and coiled-coil domain-containing protein 2 from Xenopus tropicalis (Western clawed frog).